Here is a 549-residue protein sequence, read N- to C-terminus: Nectin-3 (549 aa).

Positions 1 to 57 (MARTLRPSPLCPGGGKAQLSSASLLGAGLLLQPPTPPPLLLLLFPLLLFSRLCGALA) are cleaved as a signal peptide. Over 58–404 (GPIIVEPHVT…ATIKDDTIAT (347 aa)) the chain is Extracellular. An Ig-like V-type domain is found at 59–165 (PIIVEPHVTA…GNAQSSTTVT (107 aa)). Residues asparagine 73, asparagine 83, asparagine 125, asparagine 186, asparagine 222, and asparagine 331 are each glycosylated (N-linked (GlcNAc...) asparagine). Cysteine 78 and cysteine 148 are oxidised to a cystine. 2 Ig-like C2-type domains span residues 170–258 (PTVS…KDIR) and 269–354 (PEVS…KVIY). 2 cysteine pairs are disulfide-bonded: cysteine 193–cysteine 246 and cysteine 291–cysteine 338. Residues 405 to 425 (IIASVVGGALFIVLVSVLAGI) form a helical membrane-spanning segment. At 426 to 549 (FCYRRRRTFR…SVISRREWYV (124 aa)) the chain is on the cytoplasmic side.

It belongs to the nectin family. In terms of assembly, cis- and trans-homodimer. Can form trans-heterodimers with NECTIN1, NECTIN2, PVR, IGSF4B/Necl-1 and with IGSF4. Interaction between NECTIN1 and NECTIN3 on the pre- and postsynaptic sites, respectively, initiates the formation of puncta adherentia junctions between axons and dendrites. Interacts (via Cytoplasmic domain) with AFDN, providing a connection with the actin cytoskeleton. Binds with low affinity to TIGIT. As to quaternary structure, (Microbial infection) Interacts with C.difficile toxin TcdB, suggesting that it may contribute to TcdB toxin entry into cells. It was however shown that NECTIN3/PVRL3 does not act as a major receptor for TcdB. In terms of tissue distribution, predominantly expressed in testis and placenta as well as in many cell lines, including epithelial cell lines.

It localises to the cell membrane. The protein localises to the postsynaptic cell membrane. The protein resides in the cell junction. It is found in the adherens junction. In terms of biological role, cell adhesion molecule that promotes cell-cell adhesion through heterophilic trans-interactions with nectins-like or other nectins, such as trans-interaction with NECTIN2 at Sertoli-spermatid junctions. Trans-interaction with PVR induces activation of CDC42 and RAC small G proteins through common signaling molecules such as SRC and RAP1. Induces endocytosis-mediated down-regulation of PVR from the cell surface, resulting in reduction of cell movement and proliferation. Involved in axon guidance by promoting contacts between the commissural axons and the floor plate cells. Also involved in the formation of cell-cell junctions, including adherens junctions and synapses. Promotes formation of checkerboard-like cellular pattern of hair cells and supporting cells in the auditory epithelium via heterophilic interaction with NECTIN1: NECTIN1 is present in the membrane of hair cells and associates with NECTIN3 on supporting cells, thereby mediating heterotypic adhesion between these two cell types. Plays a role in the morphology of the ciliary body. The chain is Nectin-3 from Homo sapiens (Human).